The primary structure comprises 472 residues: Tyrosine--tRNA ligase, mitochondrial (472 aa).

Tyrosine 72 is an L-tyrosine binding site. Residue aspartate 76 coordinates ATP. The short motif at 77–86 is the 'HIGH' region element; sequence PTGDSLHVGH. The L-tyrosine site is built by aspartate 116, tyrosine 216, glutamine 220, aspartate 223, and glutamine 242. The ATP site is built by isoleucine 269 and lysine 279. The 'KMSKS' region motif lies at 276–280; it reads KLGKS. 2 positions are modified to N6-acetyllysine: lysine 350 and lysine 362.

The protein belongs to the class-I aminoacyl-tRNA synthetase family. Homodimer.

The protein localises to the mitochondrion matrix. It catalyses the reaction tRNA(Tyr) + L-tyrosine + ATP = L-tyrosyl-tRNA(Tyr) + AMP + diphosphate + H(+). Catalyzes the attachment of tyrosine to tRNA(Tyr) in a two-step reaction: tyrosine is first activated by ATP to form Tyr-AMP and then transferred to the acceptor end of tRNA(Tyr). This chain is Tyrosine--tRNA ligase, mitochondrial (Yars2), found in Mus musculus (Mouse).